The following is a 72-amino-acid chain: Putative snRNP Sm-like protein (72 aa).

In terms of domain architecture, Sm spans 4–72; that stretch reads RPLDILNNAL…RGDNVVYVSP (69 aa).

This sequence belongs to the snRNP Sm proteins family.

In Methanosarcina acetivorans (strain ATCC 35395 / DSM 2834 / JCM 12185 / C2A), this protein is Putative snRNP Sm-like protein.